A 36-amino-acid chain; its full sequence is Photosystem I reaction center subunit VIII (36 aa).

The chain crosses the membrane as a helical span at residues Leu6–Leu28.

The protein belongs to the PsaI family.

The protein resides in the plastid. The protein localises to the chloroplast thylakoid membrane. Its function is as follows. May help in the organization of the PsaL subunit. This chain is Photosystem I reaction center subunit VIII, found in Acorus gramineus (Dwarf sweet flag).